The primary structure comprises 465 residues: Iron transporter FTH1 (465 aa).

Residues 1–11 (MAFEDYFSFQI) lie on the Vacuolar side of the membrane. The helical transmembrane segment at 12-32 (FFIFLRESLEIVVIVSILLTI) threads the bilayer. The Cytoplasmic segment spans residues 33–135 (VKQGLSVEDD…LYQKLKIQIL (103 aa)). Residues 44-66 (PFEGSSSSAGLPSPNTNTNADST) form a disordered region. Over residues 46 to 66 (EGSSSSAGLPSPNTNTNADST) the composition is skewed to polar residues. A helical membrane pass occupies residues 136 to 156 (AGGAFGLLLCMLIGGAFVSIF). The Vacuolar portion of the chain corresponds to 157–170 (YHIGTDLWTLSEHY). The helical transmembrane segment at 171–191 (YEGVLSLVASVIISVMGLFFL) threads the bilayer. At 192 to 289 (RMGKLREKFR…FFFRYSSSLS (98 aa)) the chain is on the cytoplasmic side. The chain crosses the membrane as a helical span at residues 290–310 (LKICLVVATCFLYLIAAGLFS). Residues 311–358 (KGVWQLELQDYVNKCNGQDMSEVGNGPGSYDISRSVWHVNCCNGEKDG) lie on the Vacuolar side of the membrane. Residues 359-379 (GWMIFTAIFGWTNSATVGSVI) traverse the membrane as a helical segment. Residues 380-465 (SYNAYWLVLI…LIIDSSGSAN (86 aa)) lie on the Cytoplasmic side of the membrane. Residues 433-465 (TSELNSSTSEPDSQRRSKDSSVPLIIDSSGSAN) form a disordered region. Ser449 and Ser453 each carry phosphoserine.

This sequence belongs to the oxidase-dependent Fe transporter (OFeT) (TC 9.A.10.1) family. In terms of assembly, interacts with FET5.

Its subcellular location is the vacuole membrane. Functionally, high affinity iron transporter probably involved in transport of intravacuolar stores of iron. The protein is Iron transporter FTH1 (FTH1) of Saccharomyces cerevisiae (strain ATCC 204508 / S288c) (Baker's yeast).